We begin with the raw amino-acid sequence, 447 residues long: Tubulin beta-5 chain (447 aa).

GTP-binding residues include Gln11, Glu69, Ser138, Gly142, Thr143, Gly144, Asn204, and Asn226. Glu69 is a Mg(2+) binding site. The disordered stretch occupies residues 424-447; it reads QYQDATAEEEGEFDEDEELDDAMG. Residues 429–447 are compositionally biased toward acidic residues; sequence TAEEEGEFDEDEELDDAMG.

Belongs to the tubulin family. Dimer of alpha and beta chains. A typical microtubule is a hollow water-filled tube with an outer diameter of 25 nm and an inner diameter of 15 nM. Alpha-beta heterodimers associate head-to-tail to form protofilaments running lengthwise along the microtubule wall with the beta-tubulin subunit facing the microtubule plus end conferring a structural polarity. Microtubules usually have 13 protofilaments but different protofilament numbers can be found in some organisms and specialized cells. Mg(2+) is required as a cofactor.

The protein resides in the cytoplasm. The protein localises to the cytoskeleton. In terms of biological role, tubulin is the major constituent of microtubules, a cylinder consisting of laterally associated linear protofilaments composed of alpha- and beta-tubulin heterodimers. Microtubules grow by the addition of GTP-tubulin dimers to the microtubule end, where a stabilizing cap forms. Below the cap, tubulin dimers are in GDP-bound state, owing to GTPase activity of alpha-tubulin. The polypeptide is Tubulin beta-5 chain (TUBB5) (Ectocarpus variabilis (Brown alga)).